Consider the following 476-residue polypeptide: RuvB-like 1 (476 aa).

The interval 1–23 is disordered; the sequence is MDMEVDEAISGTSSSRLAPIEEV. 89 to 96 lines the ATP pocket; sequence GPPATGKT.

The protein belongs to the RuvB family. In terms of assembly, forms homohexameric rings. May form a dodecamer with ruvb-2 made of two stacked hexameric rings. Expressed in gonadal cells.

The protein localises to the cytoplasm. It localises to the nucleus. The enzyme catalyses ATP + H2O = ADP + phosphate + H(+). Functionally, possesses single-stranded DNA-stimulated ATPase and ATP dependent DNA helicase (3' to 5') activity suggesting a role in nuclear processes such as recombination and transcription. May participate in several chromatin remodeling complexes that mediate the ATP-dependent exchange of histones and remodel chromatin by shifting nucleosomes. Involvement in these complexes is likely required for transcriptional activation of selected genes and DNA repair in response to DNA damage. Involved in the Ce-Tor signaling pathway whereby it is required for the accumulation and localization of box C/D snoRNP to nucleoli to regulate ribosomal maturation and thus protein synthesis. Antagonizes the transcriptional activity of transcription factor pha-4, to control postembryonic development and adult longevity. Has a role in pharyngeal development. Has a role in gonadal development. The chain is RuvB-like 1 from Caenorhabditis elegans.